A 388-amino-acid polypeptide reads, in one-letter code: 4-hydroxy-tetrahydrodipicolinate synthase 1, chloroplastic (388 aa).

The tract at residues 1–51 (MPYLQPPRPHPHPHPTSRLSRASPPSPFPFFPAGTSRSGRLQPVPVSGHSA) is disordered. Residues 1–62 (MPYLQPPRPH…RVSKGKFAVA (62 aa)) constitute a chloroplast transit peptide. Residue Thr131 participates in pyruvate binding. Tyr217 acts as the Proton donor/acceptor in catalysis. The active-site Schiff-base intermediate with substrate is Lys245. Pyruvate is bound at residue Ile284.

The protein belongs to the DapA family. As to quaternary structure, tetramer of modified subunits derived from two genes in different combinations.

Its subcellular location is the plastid. It localises to the chloroplast. It catalyses the reaction L-aspartate 4-semialdehyde + pyruvate = (2S,4S)-4-hydroxy-2,3,4,5-tetrahydrodipicolinate + H2O + H(+). It functions in the pathway amino-acid biosynthesis; L-lysine biosynthesis via DAP pathway; (S)-tetrahydrodipicolinate from L-aspartate: step 3/4. Sensitive to lysine inhibition. This inhibition increase in an allosteric manner with increasing concentration of the inhibitor. Its function is as follows. Catalyzes the condensation of (S)-aspartate-beta-semialdehyde [(S)-ASA] and pyruvate to 4-hydroxy-tetrahydrodipicolinate (HTPA). The polypeptide is 4-hydroxy-tetrahydrodipicolinate synthase 1, chloroplastic (Triticum aestivum (Wheat)).